A 338-amino-acid polypeptide reads, in one-letter code: MNLQRFPRYPLTFGPTPIQPLKRLSAHLGGKVELYAKREDCNSGLAFGGNKTRKLEYLVPDALAQGADTLVSIGGVQSNQTRQVAAVAAHLGMKCVLVQEHWVNYEDPVYDRVGNIQLSRMMGADVRLVADGFDIGIRRSWEEAMESVRQAGGKPYPIPAGCSEHPLGGLGFVGFAEEVRAQEAELGFRFDYVVVCSVTGSTQAGMVVGFAADGRADRVIGIDASAKPEQTREQITRIARHTAELVGLGRDIVERDVVLDTRYGGPEYGLPSDGTLEAIRLCARLEGMLTDPVYEGKSMHGMIDKVRLGEFEPGSKVLYAHLGGAPALSAYNGIFRNG.

Lysine 51 carries the post-translational modification N6-(pyridoxal phosphate)lysine. Serine 78 functions as the Nucleophile in the catalytic mechanism.

Belongs to the ACC deaminase/D-cysteine desulfhydrase family. In terms of assembly, homotrimer. Pyridoxal 5'-phosphate is required as a cofactor.

It carries out the reaction 1-aminocyclopropane-1-carboxylate + H2O = 2-oxobutanoate + NH4(+). Its function is as follows. Catalyzes a cyclopropane ring-opening reaction, the irreversible conversion of 1-aminocyclopropane-1-carboxylate (ACC) to ammonia and alpha-ketobutyrate. Allows growth on ACC as a nitrogen source. This chain is 1-aminocyclopropane-1-carboxylate deaminase, found in Burkholderia cenocepacia (strain ATCC BAA-245 / DSM 16553 / LMG 16656 / NCTC 13227 / J2315 / CF5610) (Burkholderia cepacia (strain J2315)).